The following is a 143-amino-acid chain: Large ribosomal subunit protein uL15 (143 aa).

The segment at 1-51 is disordered; that stretch reads MELNGIKPAAGAKHAKRRVGRGIGSGIGKTAGRGHKGQKSRAGGFHKVGFE. Residues 21-31 show a composition bias toward gly residues; the sequence is RGIGSGIGKTA.

This sequence belongs to the universal ribosomal protein uL15 family. As to quaternary structure, part of the 50S ribosomal subunit.

Binds to the 23S rRNA. The polypeptide is Large ribosomal subunit protein uL15 (Variovorax paradoxus (strain S110)).